Here is an 879-residue protein sequence, read N- to C-terminus: Phosphoenolpyruvate carboxylase (879 aa).

Catalysis depends on residues His138 and Lys546.

The protein belongs to the PEPCase type 1 family. Mg(2+) serves as cofactor.

It carries out the reaction oxaloacetate + phosphate = phosphoenolpyruvate + hydrogencarbonate. Functionally, forms oxaloacetate, a four-carbon dicarboxylic acid source for the tricarboxylic acid cycle. In Pectobacterium atrosepticum (strain SCRI 1043 / ATCC BAA-672) (Erwinia carotovora subsp. atroseptica), this protein is Phosphoenolpyruvate carboxylase.